Here is a 214-residue protein sequence, read N- to C-terminus: Membrane-spanning 4-domains subfamily A member 3 (214 aa).

Residues 1–31 (MASHEVDNAELGSASAHGTPGSEAGPEELNT) form a disordered region. The Cytoplasmic segment spans residues 1-49 (MASHEVDNAELGSASAHGTPGSEAGPEELNTSVYQPIDGSPDYQKAKLQ). The chain crosses the membrane as a helical span at residues 50–70 (VLGAIQILNAAMILALGVFLG). Over 71-81 (SLQYPYHFQKH) the chain is Extracellular. The helical transmembrane segment at 82 to 102 (FFFFTFYTGYPIWGAVFFCSS) threads the bilayer. Over 103-124 (GTLSVVAGIKPTRTWIQNSFGM) the chain is Cytoplasmic. Residues 125–145 (NIASATIALVGTAFLSLNIAV) form a helical membrane-spanning segment. Residues 146-175 (NIQSLRSCHSSSESPDLCNYMGSISNGMVS) are Extracellular-facing. The helical transmembrane segment at 176 to 196 (LLLILTLLELCVTISTIAMWC) threads the bilayer. At 197–214 (NANCCNSREEISSPPNSV) the chain is on the cytoplasmic side.

The protein belongs to the MS4A family. Interacts with CDKN3. Interacts with CDKN3-CDK2 complexes through its binding to CDKN3; this interaction facilitates dissociation of cyclin A from CDKN3-CDK2 complexes. Expressed specifically in hematopoietic cells and tissues.

The protein localises to the endomembrane system. Its subcellular location is the cytoplasm. The protein resides in the perinuclear region. Functionally, hematopoietic modulator for the G1-S cell cycle transition. Modulates the level of phosphorylation of cyclin-dependent kinase 2 (CDK2) through its direct binding to cyclin-dependent kinase inhibitor 3 (CDKN3/KAP). This Homo sapiens (Human) protein is Membrane-spanning 4-domains subfamily A member 3 (MS4A3).